A 242-amino-acid chain; its full sequence is Probable transcriptional regulatory protein mhp472 (242 aa).

The protein belongs to the TACO1 family.

Its subcellular location is the cytoplasm. In Mesomycoplasma hyopneumoniae (strain 232) (Mycoplasma hyopneumoniae), this protein is Probable transcriptional regulatory protein mhp472.